The following is a 217-amino-acid chain: Ribose-5-phosphate isomerase A (217 aa).

Substrate contacts are provided by residues 28-31 (TGST), 81-84 (DGAD), and 94-97 (KGGG). Glutamate 103 acts as the Proton acceptor in catalysis. Lysine 121 lines the substrate pocket.

Belongs to the ribose 5-phosphate isomerase family. As to quaternary structure, homodimer.

It carries out the reaction aldehydo-D-ribose 5-phosphate = D-ribulose 5-phosphate. It participates in carbohydrate degradation; pentose phosphate pathway; D-ribose 5-phosphate from D-ribulose 5-phosphate (non-oxidative stage): step 1/1. In terms of biological role, catalyzes the reversible conversion of ribose-5-phosphate to ribulose 5-phosphate. In Aeromonas hydrophila subsp. hydrophila (strain ATCC 7966 / DSM 30187 / BCRC 13018 / CCUG 14551 / JCM 1027 / KCTC 2358 / NCIMB 9240 / NCTC 8049), this protein is Ribose-5-phosphate isomerase A.